Reading from the N-terminus, the 343-residue chain is MDRIIDTAATSEDEAIEVSIRPKRLADYLGQQPVREQMDIYIQATKARAEALDHVLIFGPPGLGKTTLSHVIAYELGVKLRVTSGPVIEKAGDLAALLTNLQPYDVLFIDEIHRLSPVVEEVLYPAMEDFQIDIMIGEGPAARSIKIDLPPFTLIGATTRTGLLTAPLRDRFGIVQRLEFYSPEDLARIVRRSAGILNIDCTTEGAAEIAQRARGTPRIANRLLRRVRDYAEVKAGGQITIEVAQAAMQMLKVDQGGFDELDRRLLHTIVEYFDGGPVGIESLAASLSEERGTLEDVVEPYLIQQGFLVRTARGRMATDKAYQHLALQPRERVSAFTDPEDLF.

Residues 1–181 (MDRIIDTAAT…FGIVQRLEFY (181 aa)) are large ATPase domain (RuvB-L). Residues Ile-20, Arg-21, Gly-62, Lys-65, Thr-66, Thr-67, 128–130 (EDF), Arg-171, Tyr-181, and Arg-218 each bind ATP. Thr-66 serves as a coordination point for Mg(2+). The segment at 182 to 252 (SPEDLARIVR…VAQAAMQMLK (71 aa)) is small ATPAse domain (RuvB-S). The segment at 255–343 (QGGFDELDRR…SAFTDPEDLF (89 aa)) is head domain (RuvB-H). DNA-binding residues include Arg-291, Arg-310, and Arg-315.

This sequence belongs to the RuvB family. As to quaternary structure, homohexamer. Forms an RuvA(8)-RuvB(12)-Holliday junction (HJ) complex. HJ DNA is sandwiched between 2 RuvA tetramers; dsDNA enters through RuvA and exits via RuvB. An RuvB hexamer assembles on each DNA strand where it exits the tetramer. Each RuvB hexamer is contacted by two RuvA subunits (via domain III) on 2 adjacent RuvB subunits; this complex drives branch migration. In the full resolvosome a probable DNA-RuvA(4)-RuvB(12)-RuvC(2) complex forms which resolves the HJ.

Its subcellular location is the cytoplasm. It carries out the reaction ATP + H2O = ADP + phosphate + H(+). Its function is as follows. The RuvA-RuvB-RuvC complex processes Holliday junction (HJ) DNA during genetic recombination and DNA repair, while the RuvA-RuvB complex plays an important role in the rescue of blocked DNA replication forks via replication fork reversal (RFR). RuvA specifically binds to HJ cruciform DNA, conferring on it an open structure. The RuvB hexamer acts as an ATP-dependent pump, pulling dsDNA into and through the RuvAB complex. RuvB forms 2 homohexamers on either side of HJ DNA bound by 1 or 2 RuvA tetramers; 4 subunits per hexamer contact DNA at a time. Coordinated motions by a converter formed by DNA-disengaged RuvB subunits stimulates ATP hydrolysis and nucleotide exchange. Immobilization of the converter enables RuvB to convert the ATP-contained energy into a lever motion, pulling 2 nucleotides of DNA out of the RuvA tetramer per ATP hydrolyzed, thus driving DNA branch migration. The RuvB motors rotate together with the DNA substrate, which together with the progressing nucleotide cycle form the mechanistic basis for DNA recombination by continuous HJ branch migration. Branch migration allows RuvC to scan DNA until it finds its consensus sequence, where it cleaves and resolves cruciform DNA. The chain is Holliday junction branch migration complex subunit RuvB from Xylella fastidiosa (strain 9a5c).